A 509-amino-acid polypeptide reads, in one-letter code: MEFSPRAAELTTLLESRMTNFYTNFQVDEIGRVVSVGDGIARVYGLNEIQAGEMVEFASGVKGIALNLENENVGIVVFGSDTAIKEGDLVKRTGSIVDVPAGKAMLGRVVDALGVPIDGKGALSDHERRRVEVKAPGIIERKSVHEPMQTGLKAVDSLVPIGRGQRELIIGDRQTGKTAIAIDTILNQKQMNSRGTNESETLYCVYVAIGQKRSTVAQLVQILSEANALEYSILVAATASDPAPLQFLAPYSGCAMGEYFRDNGMHALIIYDDLSKQAVAYRQMSLLLRRPPGREAFPGDVFYLHSRLLERAAKRSDQTGAGSSTALPVIETQAGDVSAYIPTNVISITDGQICLETDVFYRGIRPAINVGLSVSRVGSAAQLKAMKQVCGSSKLELAQYREVAAFAQFGSDLDAASQALLNRGARLTEVPKQPQYEPLPIEKQIVVIYAAVNGFCDRMPLDRISQYEKAILSTINPELQKSFLEKGGLTNERKMEPDASLKESTLPYL.

ATP is bound at residue 171-178 (GDRQTGKT).

It belongs to the ATPase alpha/beta chains family. F-type ATPases have 2 components, CF(1) - the catalytic core - and CF(0) - the membrane proton channel. CF(1) has five subunits: alpha(3), beta(3), gamma(1), delta(1), epsilon(1). CF(0) has three main subunits: a, b and c.

The protein localises to the mitochondrion. It is found in the mitochondrion inner membrane. In terms of biological role, mitochondrial membrane ATP synthase (F(1)F(0) ATP synthase or Complex V) produces ATP from ADP in the presence of a proton gradient across the membrane which is generated by electron transport complexes of the respiratory chain. F-type ATPases consist of two structural domains, F(1) - containing the extramembraneous catalytic core, and F(0) - containing the membrane proton channel, linked together by a central stalk and a peripheral stalk. During catalysis, ATP synthesis in the catalytic domain of F(1) is coupled via a rotary mechanism of the central stalk subunits to proton translocation. Subunits alpha and beta form the catalytic core in F(1). Rotation of the central stalk against the surrounding alpha(3)beta(3) subunits leads to hydrolysis of ATP in three separate catalytic sites on the beta subunits. Subunit alpha does not bear the catalytic high-affinity ATP-binding sites. The protein is ATP synthase subunit alpha, mitochondrial (ATPA) of Triticum aestivum (Wheat).